A 276-amino-acid polypeptide reads, in one-letter code: Probable endonuclease 4 (276 aa).

Zn(2+)-binding residues include H70, H108, E143, D176, H179, H210, D223, H225, and E255.

This sequence belongs to the AP endonuclease 2 family. Requires Zn(2+) as cofactor.

It carries out the reaction Endonucleolytic cleavage to 5'-phosphooligonucleotide end-products.. In terms of biological role, endonuclease IV plays a role in DNA repair. It cleaves phosphodiester bonds at apurinic or apyrimidinic (AP) sites, generating a 3'-hydroxyl group and a 5'-terminal sugar phosphate. The sequence is that of Probable endonuclease 4 from Mesomycoplasma hyopneumoniae (strain 7448) (Mycoplasma hyopneumoniae).